We begin with the raw amino-acid sequence, 445 residues long: GTPase Der (445 aa).

EngA-type G domains follow at residues 3 to 167 and 180 to 353; these read PVIA…YAGQ and IKIA…AAAM. Residues 9-16, 56-60, 119-122, 186-193, 233-237, and 298-301 each bind GTP; these read GRPNVGKS, DTGGF, NKAE, DTAGL, and NKWD. The KH-like domain maps to 354 to 438; that stretch reads AKLPTPKLTR…PLRIEFRSSN (85 aa).

The protein belongs to the TRAFAC class TrmE-Era-EngA-EngB-Septin-like GTPase superfamily. EngA (Der) GTPase family. Associates with the 50S ribosomal subunit.

Its function is as follows. GTPase that plays an essential role in the late steps of ribosome biogenesis. The chain is GTPase Der from Burkholderia vietnamiensis (strain G4 / LMG 22486) (Burkholderia cepacia (strain R1808)).